A 574-amino-acid polypeptide reads, in one-letter code: Envelope glycoprotein (574 aa).

The first 22 residues, 1 to 22 (MTLKDIPFWRVLLIFQTARVYA), serve as a signal peptide directing secretion. The Extracellular portion of the chain corresponds to 23–514 (GFGDPREAIT…TGLHGLLPYL (492 aa)). 2 N-linked (GlcNAc...) asparagine; by host glycosylation sites follow: asparagine 117 and asparagine 233. Positions 243-246 (CWLC) match the CXXC motif. Intrachain disulfides connect cysteine 243–cysteine 246, cysteine 243–cysteine 471, and cysteine 463–cysteine 470. 8 N-linked (GlcNAc...) asparagine; by host glycosylation sites follow: asparagine 260, asparagine 267, asparagine 288, asparagine 298, asparagine 312, asparagine 318, asparagine 327, and asparagine 345. The tract at residues 386 to 406 (FIPLLVGLGITTAVSTGTAGL) is fusion peptide. Coiled coils occupy residues 407-457 (GYSI…LLTA) and 467-503 (QEKCCFYANKSGIVRDKIKRLQEDLEKRRKEIIDNPF). The tract at residues 446-462 (LQNRRGLDLLTAEQGGI) is immunosuppression. Positions 463-471 (CLALQEKCC) match the CX6CC motif. Residue asparagine 475 is glycosylated (N-linked (GlcNAc...) asparagine; by host). A helical membrane pass occupies residues 515–535 (LPLLGPLFCLLLLITFGPLIF). Over 536 to 574 (NKIITFVKQQIDAIQAKPIQVHYHRLEQEDNGGVYLRVS) the chain is Cytoplasmic. The YXXL motif; contains endocytosis signal signature appears at 558 to 561 (YHRL).

As to quaternary structure, the mature envelope protein (Env) consists of a trimer of SU-TM heterodimers attached by a labile interchain disulfide bond. Post-translationally, specific enzymatic cleavages in vivo yield mature proteins. Envelope glycoproteins are synthesized as an inactive precursor that is N-glycosylated and processed likely by host cell furin or by a furin-like protease in the Golgi to yield the mature SU and TM proteins. The cleavage site between SU and TM requires the minimal sequence [KR]-X-[KR]-R. The R-peptide is released from the C-terminus of the cytoplasmic tail of the TM protein upon particle formation as a result of proteolytic cleavage by the viral protease. Cleavage of this peptide is required for TM to become fusogenic. The CXXC motif is highly conserved across a broad range of retroviral envelope proteins. It is thought to participate in the formation of a labile disulfide bond possibly with the CX6CC motif present in the transmembrane protein. Isomerization of the intersubunit disulfide bond to an SU intrachain disulfide bond is thought to occur upon receptor recognition in order to allow membrane fusion.

The protein resides in the virion membrane. It is found in the host cell membrane. The surface protein (SU) attaches the virus to the host cell by binding to its receptor. This interaction triggers the refolding of the transmembrane protein (TM) and is thought to activate its fusogenic potential by unmasking its fusion peptide. Fusion occurs at the host cell plasma membrane. Functionally, the transmembrane protein (TM) acts as a class I viral fusion protein. Under the current model, the protein has at least 3 conformational states: pre-fusion native state, pre-hairpin intermediate state, and post-fusion hairpin state. During viral and target cell membrane fusion, the coiled coil regions (heptad repeats) assume a trimer-of-hairpins structure, positioning the fusion peptide in close proximity to the C-terminal region of the ectodomain. The formation of this structure appears to drive apposition and subsequent fusion of viral and target cell membranes. Membranes fusion leads to delivery of the nucleocapsid into the cytoplasm. The protein is Envelope glycoprotein (env) of Macaca mulatta (Rhesus macaque).